A 129-amino-acid polypeptide reads, in one-letter code: Transcriptional activator protein (129 aa).

The Nuclear localization signal motif lies at 13–28; it reads KAQHRAAKRRAIRRRR. A zinc finger spans residues 33–50; it reads CGCSIYIHIDCRNNGFTH. The segment at 73–118 is disordered; the sequence is LFQDNQRRGSPLHQHQDIPLTNQVQPQPEESIGSPQGISQLPSMDD. Residues 91-114 show a composition bias toward polar residues; that stretch reads PLTNQVQPQPEESIGSPQGISQLP. The tract at residues 115-129 is transactivation; the sequence is SMDDIDDSFWENLFK.

Belongs to the geminiviridae transcriptional activator protein family. As to quaternary structure, monomer. Homodimer. Homooligomer. Self-interaction correlates with nuclear localization and efficient activation of transcription. Monomers suppress local silencing by interacting with and inactivating host adenosine kinase (ADK) in the cytoplasm. Interacts with and inhibits host SNF1 kinase. Binds to ssDNA. In terms of processing, phosphorylated.

The protein resides in the host nucleus. Its subcellular location is the host cytoplasm. In terms of biological role, strong activator of the late viral genes promoters. Enhances the expression of the capsid protein and nuclear shuttle protein. Acts as a suppressor of RNA-mediated gene silencing, also known as post-transcriptional gene silencing (PTGS), a mechanism of plant viral defense that limits the accumulation of viral RNAs. Suppresses the host RNA silencing by inhibiting adenosine kinase (ADK), a kinase involved in a general methylation pathway. Also suppresses the host basal defense by interacting with and inhibiting SNF1 kinase, a key regulator of cell metabolism implicated in innate antiviral defense. Determines pathogenicity. The protein is Transcriptional activator protein of Tomato golden mosaic virus (strain Yellow vein) (TGMV).